A 431-amino-acid chain; its full sequence is Histidine--tRNA ligase (431 aa).

Belongs to the class-II aminoacyl-tRNA synthetase family. In terms of assembly, homodimer.

Its subcellular location is the cytoplasm. The catalysed reaction is tRNA(His) + L-histidine + ATP = L-histidyl-tRNA(His) + AMP + diphosphate + H(+). The polypeptide is Histidine--tRNA ligase (Finegoldia magna (strain ATCC 29328 / DSM 20472 / WAL 2508) (Peptostreptococcus magnus)).